A 161-amino-acid polypeptide reads, in one-letter code: N5-carboxyaminoimidazole ribonucleotide mutase (161 aa).

Residues Ser-9, Asp-12, and Arg-39 each coordinate substrate.

It belongs to the AIR carboxylase family. Class I subfamily.

It carries out the reaction 5-carboxyamino-1-(5-phospho-D-ribosyl)imidazole + H(+) = 5-amino-1-(5-phospho-D-ribosyl)imidazole-4-carboxylate. It participates in purine metabolism; IMP biosynthesis via de novo pathway; 5-amino-1-(5-phospho-D-ribosyl)imidazole-4-carboxylate from 5-amino-1-(5-phospho-D-ribosyl)imidazole (N5-CAIR route): step 2/2. In terms of biological role, catalyzes the conversion of N5-carboxyaminoimidazole ribonucleotide (N5-CAIR) to 4-carboxy-5-aminoimidazole ribonucleotide (CAIR). This Vibrio parahaemolyticus serotype O3:K6 (strain RIMD 2210633) protein is N5-carboxyaminoimidazole ribonucleotide mutase.